Here is a 303-residue protein sequence, read N- to C-terminus: Carboxypeptidase B (303 aa).

In terms of domain architecture, Peptidase M14 spans 5–298 (SYHDYDEINA…EGVKVVANFV (294 aa)). Zn(2+) is bound by residues His-63 and Glu-66. Residues 63–66 (HARE), Arg-118, and 136–137 (NR) contribute to the substrate site. His-189 lines the Zn(2+) pocket. Substrate-binding positions include 190-191 (SY) and Tyr-241. Glu-264 serves as the catalytic Proton donor/acceptor.

The protein belongs to the peptidase M14 family. It depends on Zn(2+) as a cofactor.

The protein localises to the secreted. The catalysed reaction is Preferential release of a C-terminal lysine or arginine amino acid.. In Astacus astacus (Noble crayfish), this protein is Carboxypeptidase B.